A 319-amino-acid chain; its full sequence is Malate dehydrogenase (319 aa).

Residues 10 to 15 (GSGNIG) and D34 contribute to the NAD(+) site. Substrate is bound by residues R83 and R89. Residues N96 and 119 to 121 (ITN) contribute to the NAD(+) site. N121 and R152 together coordinate substrate. H176 (proton acceptor) is an active-site residue.

This sequence belongs to the LDH/MDH superfamily. MDH type 3 family.

The catalysed reaction is (S)-malate + NAD(+) = oxaloacetate + NADH + H(+). Its function is as follows. Catalyzes the reversible oxidation of malate to oxaloacetate. This is Malate dehydrogenase from Paramagnetospirillum magneticum (strain ATCC 700264 / AMB-1) (Magnetospirillum magneticum).